A 296-amino-acid chain; its full sequence is Protoheme IX farnesyltransferase (296 aa).

Residues 1 to 9 (MMFKQYLQV) are Cytoplasmic-facing. The helical transmembrane segment at 10-28 (TKPGIIFGNLISVIGGFLL) threads the bilayer. Over 29–37 (ASKGSIDYP) the chain is Periplasmic. The helical transmembrane segment at 38-56 (LFIYTLVGVSLVVASGCVF) threads the bilayer. Residues 57 to 78 (NNFIDRDIDRKMERTKNRVLVK) are Cytoplasmic-facing. A helical transmembrane segment spans residues 79-97 (GLISPGVSLVYATLLGIAG). At 98 to 107 (FMLLWFGANP) the chain is on the periplasmic side. The chain crosses the membrane as a helical span at residues 108–126 (LACWLGVMGFVVYVGIYSL). Residues 127-197 (YMKRHSVYGT…YQAANIPVLP (71 aa)) lie on the Cytoplasmic side of the membrane. A helical membrane pass occupies residues 198-216 (VVKGISVAKNHITLYIIAF). Over 217-228 (AVATLMLTLGGY) the chain is Periplasmic. The chain crosses the membrane as a helical span at residues 229-247 (AGYKYLVVAAAVSVWWLGM). Topologically, residues 248–268 (ALRGYKVEDDKVWARKLFGFS) are cytoplasmic. Residues 269–287 (IIAITALSIMMSVDFMVPN) form a helical membrane-spanning segment. The Periplasmic portion of the chain corresponds to 288-296 (SQSLLTYVW).

The protein belongs to the UbiA prenyltransferase family. Protoheme IX farnesyltransferase subfamily.

The protein localises to the cell inner membrane. It carries out the reaction heme b + (2E,6E)-farnesyl diphosphate + H2O = Fe(II)-heme o + diphosphate. It participates in porphyrin-containing compound metabolism; heme O biosynthesis; heme O from protoheme: step 1/1. Functionally, converts heme B (protoheme IX) to heme O by substitution of the vinyl group on carbon 2 of heme B porphyrin ring with a hydroxyethyl farnesyl side group. The sequence is that of Protoheme IX farnesyltransferase from Salmonella arizonae (strain ATCC BAA-731 / CDC346-86 / RSK2980).